The following is a 248-amino-acid chain: Probable ATP-dependent transporter SufC (248 aa).

One can recognise an ABC transporter domain in the interval 2–246 (LSIKDLHVSV…EEQGYGWLTE (245 aa)). Position 34 to 41 (34 to 41 (GPNGSGKS)) interacts with ATP.

This sequence belongs to the ABC transporter superfamily. Ycf16 family. Part of the SufBCD complex that contains SufB, SufC and SufD. Interacts directly with SufB and SufD. Interacts with SufA.

It localises to the cytoplasm. Has low ATPase activity. The SufBCD complex acts synergistically with SufE to stimulate the cysteine desulfurase activity of SufS. The SufBCD complex contributes to the assembly or repair of oxygen-labile iron-sulfur clusters under oxidative stress. May facilitate iron uptake from extracellular iron chelators under iron limitation. This chain is Probable ATP-dependent transporter SufC (sufC), found in Escherichia coli (strain K12).